The primary structure comprises 109 residues: Nucleoid-associated protein Sbal223_1770 (109 aa).

It belongs to the YbaB/EbfC family. Homodimer.

It is found in the cytoplasm. Its subcellular location is the nucleoid. Binds to DNA and alters its conformation. May be involved in regulation of gene expression, nucleoid organization and DNA protection. This Shewanella baltica (strain OS223) protein is Nucleoid-associated protein Sbal223_1770.